Here is a 277-residue protein sequence, read N- to C-terminus: Homeobox protein Nkx-6.2 (277 aa).

A repressor domain region spans residues 89–142 (AGVYFGPAAAVARGYPKPLAELPGRPPIFWPGVVQGAPWRDPRLAGPAPAGGVL). 2 disordered regions span residues 132–155 (LAGP…RPTF) and 210–250 (EMAS…DDEK). The homeobox DNA-binding region spans 148-207 (KKHSRPTFSGQQIFALEKTFEQTKYLAGPERARLAYSLGMTESQVKVWFQNRRTKWRKRH). Residues 216–226 (KKQDSDAEKLK) are compositionally biased toward basic and acidic residues.

As to expression, highest expression in brain.

It localises to the nucleus. In terms of biological role, transcription factor with repressor activity involved in the regulation of axon-glial interactions at myelin paranodes in oligodendrocytes. Binds to the consensus DNA sequence 5'-(A/T)TTAATGA-3'. In oligodendrocytes, binds to MBP and PLP1 promoter regions. The sequence is that of Homeobox protein Nkx-6.2 (NKX6-2) from Homo sapiens (Human).